Reading from the N-terminus, the 61-residue chain is DGYIRGGDGCKVSCVIDHVFCDNECKAAGGSYGYCWGWGLACWCEGLPADREWKYETNTCG.

In terms of domain architecture, LCN-type CS-alpha/beta spans 1-61 (DGYIRGGDGC…EWKYETNTCG (61 aa)). 4 cysteine pairs are disulfide-bonded: Cys-10–Cys-60, Cys-14–Cys-35, Cys-21–Cys-42, and Cys-25–Cys-44.

Belongs to the long (4 C-C) scorpion toxin superfamily. Sodium channel inhibitor family. Beta subfamily. In terms of tissue distribution, expressed by the venom gland.

Its subcellular location is the secreted. In terms of biological role, excitatory insect beta-toxins induce a spastic paralysis. They bind voltage-independently at site-4 of sodium channels (Nav) and shift the voltage of activation toward more negative potentials thereby affecting sodium channel activation and promoting spontaneous and repetitive firing. This toxin is active only on insects. It operates by inducing a fast contraction paralysis without depressant activity. It is more similar to the excitatory toxins in its mode of action and the depressant toxins in its primary structure. In Leiurus hebraeus (Hebrew deathstalker scorpion), this protein is Insect toxin LqhIT5.